Consider the following 470-residue polypeptide: MRLWTLGTSIFLRLWGTYVFPRSPSWLDFIQHLGVCCFVAFLSVSLFSAAFYWILPPVALLSSVWMITCVFLCCSKRARCFILLAVLSCGLREGRNALIAAGTGVVIFGHVENIFYNFRGLLDSMTCNLRAKSFSVHFPLLKRYTEAIQWIYGLATPLNLFDDLVSWNQTLVVSLFSPSHALEAHMNDTRGEVLGVLHHMVVTTELLTSVGQKLLALAGLLLILVSTGLFLKRFLGPCGWKYENVYITKQFVRFDEKERHQQRPCVLPLNKKERKKYVIVPSLQLTPKEKKTLGLFFLPVLTYLYMWVLFAAVDYLLYRLISSMNKQFQSLPGLEVHLKLRGEKQGTQGVVHDSAFNISMFEPSCIPKPRLSVSETWVPLSIILLTLIILGLLSSMLMQLKILVSVSFYPKVERERIEYLHAKLLEKRSKQPLREADGKPSLYFKKIHFWFPVLKMIRKKQTIPANEDDL.

Residues 1–33 (MRLWTLGTSIFLRLWGTYVFPRSPSWLDFIQHL) are Cytoplasmic-facing. Residues 34 to 54 (GVCCFVAFLSVSLFSAAFYWI) traverse the membrane as a helical segment. L55 is a topological domain (extracellular). Residues 56-76 (PPVALLSSVWMITCVFLCCSK) form a helical membrane-spanning segment. Residues 77-97 (RARCFILLAVLSCGLREGRNA) lie on the Cytoplasmic side of the membrane. Residues 98-118 (LIAAGTGVVIFGHVENIFYNF) form a helical membrane-spanning segment. Over 119 to 209 (RGLLDSMTCN…MVVTTELLTS (91 aa)) the chain is Extracellular. The chain crosses the membrane as a helical span at residues 210 to 230 (VGQKLLALAGLLLILVSTGLF). Over 231-292 (LKRFLGPCGW…LQLTPKEKKT (62 aa)) the chain is Cytoplasmic. The helical transmembrane segment at 293 to 313 (LGLFFLPVLTYLYMWVLFAAV) threads the bilayer. Topologically, residues 314 to 376 (DYLLYRLISS…PKPRLSVSET (63 aa)) are extracellular. A helical membrane pass occupies residues 377-397 (WVPLSIILLTLIILGLLSSML). Topologically, residues 398-470 (MQLKILVSVS…QTIPANEDDL (73 aa)) are cytoplasmic.

In terms of assembly, interacts with CREB3. Monomer. Homodimer. Isoform 1 interacts (via the C-terminus cytoplasmic tail) with OS9 isoform 1 (via the C-terminus tail); the interaction induces DCSTAMP redistribution to the endoplasmic reticulum-Golgi intermediate compartment. Isoform 1 interacts (via the C-terminus cytoplasmic tail) with OS9 isoform 2 (via the C-terminus tail). Glycosylated. Expressed in macrophages and bone marrow dendritic cells (BM-DC). Weakly expressed in the spleen and lymph node. Highly expressed in multi-nuclear osteoclasts compared to mono-nuclear macrophages. Expressed in foreign body giant cells (FBGCs). Isoform 1 and isoform 2 are expressed in osteoclasts.

It localises to the cell membrane. The protein localises to the endoplasmic reticulum membrane. The protein resides in the endoplasmic reticulum-Golgi intermediate compartment membrane. It is found in the endosome. Functionally, probable cell surface receptor that plays several roles in cellular fusion, cell differentiation, bone and immune homeostasis. Plays a role in TNFSF11-mediated osteoclastogenesis. Cooperates with OCSTAMP in modulating cell-cell fusion in both osteoclasts and foreign body giant cells (FBGCs). Participates in osteoclast bone resorption. Involved in inducing the expression of tartrate-resistant acid phosphatase in osteoclast precursors. Plays a role in haematopoietic stem cell differentiation of bone marrow cells toward the myeloid lineage. Inhibits the development of neutrophilic granulocytes. Plays also a role in the regulation of dendritic cell (DC) antigen presentation activity by controlling phagocytic activity. Involved in the maintenance of immune self-tolerance and avoidance of autoimmune reactions. The protein is Dendritic cell-specific transmembrane protein (Dcstamp) of Mus musculus (Mouse).